Reading from the N-terminus, the 61-residue chain is UPF0434 protein PA14_25520 (61 aa).

Belongs to the UPF0434 family.

This is UPF0434 protein PA14_25520 from Pseudomonas aeruginosa (strain UCBPP-PA14).